The chain runs to 332 residues: MNVTIYDVAREASVSMATVSRVVNGNPNVKPSTRKKVLETIERLGYRPNAVARGLASKKTTTVGVIIPDISNIFYAELARGIEDIATMYKYNIILSNSDQNQDKELHLLNNMLGKQVDGIIFMSGNVTEEHVEELKKSPVPVVLAASIESTNQIPSVTIDYEQAAFDAVQSLIDSGHKNIAFVSGTLEEPINHAKKVKGYKRALTESGLPVRDSYIVEGDYTYDSGIEAVEKLLEEDEKPTAIFVGTDEMALGVIHGAQDRGLNVPNDLEIIGFDNTRLSTMVRPQLTSVVQPMYDIGAVAMRLLTKYMNKETVDSSIVQLPHRIEFRQSTK.

Residues 1–57 (MNVTIYDVAREASVSMATVSRVVNGNPNVKPSTRKKVLETIERLGYRPNAVARGLAS) form the HTH lacI-type domain. The segment at residues 5-24 (IYDVAREASVSMATVSRVVN) is a DNA-binding region (H-T-H motif).

In terms of biological role, global transcriptional regulator of carbon catabolite repression (CCR) and carbon catabolite activation (CCA), which ensures optimal energy usage under diverse conditions. This chain is Catabolite control protein A (ccpA), found in Priestia megaterium (Bacillus megaterium).